Here is a 362-residue protein sequence, read N- to C-terminus: Molybdopterin synthase catalytic subunit (362 aa).

Residues 101–102 (HR), Lys-117, and 124–126 (KKE) each bind substrate.

This sequence belongs to the MoaE family. MOCS2B subfamily. Heterotetramer; composed of 2 small (Mocs2A) and 2 large (Mocs2B) subunits.

Its subcellular location is the cytoplasm. The catalysed reaction is 2 [molybdopterin-synthase sulfur-carrier protein]-C-terminal-Gly-aminoethanethioate + cyclic pyranopterin phosphate + H2O = molybdopterin + 2 [molybdopterin-synthase sulfur-carrier protein]-C-terminal Gly-Gly + 2 H(+). It participates in cofactor biosynthesis; molybdopterin biosynthesis. In terms of biological role, catalytic subunit of the molybdopterin synthase complex, a complex that catalyzes the conversion of precursor Z into molybdopterin. Acts by mediating the incorporation of 2 sulfur atoms from thiocarboxylated Mocs2A into precursor Z to generate a dithiolene group. The polypeptide is Molybdopterin synthase catalytic subunit (Drosophila grimshawi (Hawaiian fruit fly)).